The primary structure comprises 217 residues: Melanocortin-2 receptor accessory protein 2A (217 aa).

The N-linked (GlcNAc...) asparagine glycan is linked to asparagine 8. Residues 42–62 (IVIGFWVGLAVFVIFMFFVLT) form a helical membrane-spanning segment.

Belongs to the MRAP family. As to quaternary structure, interacts with mc4r.

Its subcellular location is the cell membrane. The protein localises to the endoplasmic reticulum membrane. Functionally, inhibitor of melanocortin receptor 4 (mc4r), a receptor involved in energy homeostasis. Plays a role during larval development in the control of energy homeostasis and body weight regulation by decreasing ligand-sensitivity of mc4r and mc4r-mediated generation of cAMP, leading to stimulate growth during larval development. Acts by stabilizing an inactive conformation of mc4r during embryonic development, when all the energy consumed is obtained from the yolk sac, possibly to speed the rapid maturation to the mobile free-feeding juvenile stage reached at 5 dpf. The chain is Melanocortin-2 receptor accessory protein 2A (mrap2a) from Danio rerio (Zebrafish).